We begin with the raw amino-acid sequence, 112 residues long: Putative regulatory protein FmdB (112 aa).

The segment covering 52–68 has biased composition (basic and acidic residues); that stretch reads QRSAHERNEKSANEPRT. Residues 52-112 are disordered; it reads QRSAHERNEK…KTARPWMVGH (61 aa). Polar residues predominate over residues 74–102; sequence CGCTGSHTCKTKPPVNQDTGKPGLQMQTK.

The protein localises to the cytoplasm. In terms of biological role, may be a positive regulator of formamidase. In Methylophilus methylotrophus (Bacterium W3A1), this protein is Putative regulatory protein FmdB (fmdB).